The primary structure comprises 346 residues: Fe(3+) ions import ATP-binding protein FbpC 3 (346 aa).

The region spanning 5–235 (LEVDGVDKSF…PIDVATAEFI (231 aa)) is the ABC transporter domain. 37–44 (GPSGCGKT) is an ATP binding site.

Belongs to the ABC transporter superfamily. Fe(3+) ion importer (TC 3.A.1.10) family. In terms of assembly, the complex is composed of two ATP-binding proteins (FbpC), two transmembrane proteins (FbpB) and a solute-binding protein (FbpA).

The protein resides in the cell membrane. The catalysed reaction is Fe(3+)(out) + ATP + H2O = Fe(3+)(in) + ADP + phosphate + H(+). Its function is as follows. Part of the ABC transporter complex FbpABC involved in Fe(3+) ions import. Responsible for energy coupling to the transport system. This is Fe(3+) ions import ATP-binding protein FbpC 3 from Rhodococcus jostii (strain RHA1).